The chain runs to 90 residues: uncharacterized protein (90 aa).

This is an uncharacterized protein from Bos taurus (Bovine).